Reading from the N-terminus, the 264-residue chain is MPSIFAYQSSEVDWCESNFQYSELVAEFYNTFSNIPFFIFGPLMMLLMHPYAQKRSRYIYVVWVLFMIIGLFSMYFHMTLSFLGQLLDEIAILWLLGSGYSIWMPRCYFPSFLGGNRSQFIRLVFITTVVSTLLSFLRPTVNAYALNSIALHILYIVCQEYRKTSNKELRHLIEVSVVLWAVALTSWISDRLLCSFWQRIHFFYLHSIWHVLISITFPYGMVTMALVDANYEMPGETLKVRYWPRDSWPVGLPYVEIRGDDKDC.

The Lumenal segment spans residues 1-27 (MPSIFAYQSSEVDWCESNFQYSELVAE). Asp13, Trp14, Glu16, Asn18, and Glu27 together coordinate Ca(2+). The chain crosses the membrane as a helical span at residues 28–48 (FYNTFSNIPFFIFGPLMMLLM). Residues 49–57 (HPYAQKRSR) lie on the Cytoplasmic side of the membrane. A helical transmembrane segment spans residues 58-78 (YIYVVWVLFMIIGLFSMYFHM). His77 serves as a coordination point for Zn(2+). The Lumenal segment spans residues 79 to 81 (TLS). A helical transmembrane segment spans residues 82–102 (FLGQLLDEIAILWLLGSGYSI). The Cytoplasmic segment spans residues 103–119 (WMPRCYFPSFLGGNRSQ). Residues 120 to 137 (FIRLVFITTVVSTLLSFL) traverse the membrane as a helical segment. Arg138 is a topological domain (lumenal). Residues 139–159 (PTVNAYALNSIALHILYIVCQ) form a helical membrane-spanning segment. The Cytoplasmic portion of the chain corresponds to 160 to 176 (EYRKTSNKELRHLIEVS). A helical membrane pass occupies residues 177–197 (VVLWAVALTSWISDRLLCSFW). The Lumenal portion of the chain corresponds to 198–206 (QRIHFFYLH). His206 and His210 together coordinate Zn(2+). Residues 207–227 (SIWHVLISITFPYGMVTMALV) traverse the membrane as a helical segment. The Cytoplasmic segment spans residues 228 to 264 (DANYEMPGETLKVRYWPRDSWPVGLPYVEIRGDDKDC).

This sequence belongs to the alkaline ceramidase family. Requires Zn(2+) as cofactor. As to expression, mainly expressed in epidermis.

It is found in the endoplasmic reticulum membrane. The enzyme catalyses an N-acylsphing-4-enine + H2O = sphing-4-enine + a fatty acid. It catalyses the reaction N-tetracosanoyl-sphing-4-enine + H2O = tetracosanoate + sphing-4-enine. It carries out the reaction an N-acylsphinganine + H2O = sphinganine + a fatty acid. The catalysed reaction is N-(9Z-octadecenoyl)-sphing-4-enine + H2O = sphing-4-enine + (9Z)-octadecenoate. The enzyme catalyses N-(15Z-tetracosenoyl)-sphing-4-enine + H2O = (15Z)-tetracosenoate + sphing-4-enine. It functions in the pathway lipid metabolism; sphingolipid metabolism. Its activity is regulated as follows. Inhibited by sphingosine. Activity is Ca(2+)-dependent. Endoplasmic reticulum ceramidase that catalyzes the hydrolysis of ceramides into sphingosine and free fatty acids at alkaline pH. Ceramides, sphingosine, and its phosphorylated form sphingosine-1-phosphate are bioactive lipids that mediate cellular signaling pathways regulating several biological processes including cell proliferation, apoptosis and differentiation. Exhibits a strong substrate specificity towards the natural stereoisomer of ceramides with D-erythro-sphingosine as a backbone and has a higher activity towards very long-chain unsaturated fatty acids like the C24:1-ceramide. May also hydrolyze dihydroceramides to produce dihydrosphingosine. ACER1 is a skin-specific ceramidase that regulates the levels of ceramides, sphingosine and sphingosine-1-phosphate in the epidermis, mediates the calcium-induced differentiation of epidermal keratinocytes and more generally plays an important role in skin homeostasis. The polypeptide is Alkaline ceramidase 1 (Homo sapiens (Human)).